Here is a 455-residue protein sequence, read N- to C-terminus: MAPDILQAFMTEKTQNAPQSGKVGFISLGCPKALVDSERILTQLRLDGYDVVPTYDDADIVVVNTCGFIDAAKQESLDAIGEAISENGKVIVTGCMGVEADRIRETHPGVLAVSGPHAYEEVVGAVHQYVPPRKEHDPFLDLVPPQGVKLTPRHYAYLKISEGCNHRCTFCIIPSMRGDLVSRPIGDVMDEAKRLVDAGVKEILVISQDTSAYGVDIKYRTGFWQGRPVKTKMQALCEALGEMGVWVRLHYVYPYPHVDDIIPLMAEGKILPYLDIPFQHASPRVLKAMKRPAHDSKTLERIRKWREICPELTIRSTFIVGFPGETEEDFQYLLDWLDEAQLDRVGAFTYSAVEGAPANELEGAVPEEVKEKRLARFMAKQAEISAARLQAKIGRTIDVLIDEVDEEGAIGRSKADAPEIDGMVYLNDETELVPGQIVQAVVEHADEHDLWARLI.

In terms of domain architecture, MTTase N-terminal spans 21–131 (GKVGFISLGC…VVGAVHQYVP (111 aa)). Positions 30, 66, 95, 164, 168, and 171 each coordinate [4Fe-4S] cluster. The region spanning 150-387 (LTPRHYAYLK…MAKQAEISAA (238 aa)) is the Radical SAM core domain. A TRAM domain is found at 390–455 (QAKIGRTIDV…DEHDLWARLI (66 aa)).

Belongs to the methylthiotransferase family. RimO subfamily. The cofactor is [4Fe-4S] cluster.

The protein localises to the cytoplasm. It carries out the reaction L-aspartate(89)-[ribosomal protein uS12]-hydrogen + (sulfur carrier)-SH + AH2 + 2 S-adenosyl-L-methionine = 3-methylsulfanyl-L-aspartate(89)-[ribosomal protein uS12]-hydrogen + (sulfur carrier)-H + 5'-deoxyadenosine + L-methionine + A + S-adenosyl-L-homocysteine + 2 H(+). Functionally, catalyzes the methylthiolation of an aspartic acid residue of ribosomal protein uS12. In Marinobacter nauticus (strain ATCC 700491 / DSM 11845 / VT8) (Marinobacter aquaeolei), this protein is Ribosomal protein uS12 methylthiotransferase RimO.